Reading from the N-terminus, the 741-residue chain is Melanoma-associated antigen D4 (741 aa).

The span at 1-13 (MAEGSFSVQSESY) shows a compositional bias: polar residues. Disordered stretches follow at residues 1-27 (MAEG…EVGE), 136-206 (RVAT…EGPS), 247-296 (MAFP…KALA), and 323-379 (PEGA…QPSL). Residues 14-27 (SVEDMDEGSDEVGE) are compositionally biased toward acidic residues. 2 stretches are compositionally biased toward polar residues: residues 140–151 (PQVSGEDTQPTT) and 187–196 (TSAQSQTGSP). The span at 354–363 (DEYESSEEER) shows a compositional bias: acidic residues. In terms of domain architecture, MAGE spans 413–611 (LQERANKLVK…REWKAHFLEA (199 aa)). The segment at 700 to 720 (VSSGTNGGASTSVLDGPSTSS) is disordered. Positions 701-720 (SSGTNGGASTSVLDGPSTSS) are enriched in polar residues.

As to quaternary structure, interacts with TRIM27. As to expression, expressed only in brain and ovary among normal tissues. Isoform 1 and isoform 2 are specifically expressed in glioma cells among cancer cells. Detected in some renal cell carcinoma samples.

Functionally, may enhance ubiquitin ligase activity of RING-type zinc finger-containing E3 ubiquitin-protein ligases. Proposed to act through recruitment and/or stabilization of the Ubl-conjugating enzyme (E2) at the E3:substrate complex. The protein is Melanoma-associated antigen D4 (MAGED4) of Homo sapiens (Human).